We begin with the raw amino-acid sequence, 578 residues long: MDPDKQDALNSIENSIYRTAFKLQSVQTLCQLDLIDSSLIQQVLLRPSFWEARKHSLSVQQLSQALQELFQKAREENPGQVHPRAPELTLSLLTTMYNSKGTGFLQLMPAAAALITLSGDSPLSKYRALFQLYAENSRGGYDSGPRMTRRVLRKLLTDLQQIPTFVGESRALCPVESATRSCFQGVLSPAIKEEKFLSWVQSEPPILLWLPTCHRLSAAERVTHPARCTLCRTFPITGLRYRCLKCLNFDICQMCFLSGLHSKSHQKSHPVIEHCIQMSAMQNTKLLFRTLRNNLLQGRCRKKEAARRQQLLDQVNPKGVPHHAQARLLKKQLNQYKDKLQAIYTSQEERICRFETRIHKLKTNQDSLWTKLQQIRRDLQARLQPPGPSSSSFQNVGNKVDHSSTEKVPKGGDYLQIKNATEDASTGEPLPKLDEVDRSHRSHTNAEHALRNPESPETTLHSTRAQSQTQKMPQKVISALPSYQEGLKQDIPKMVPAEMSSPALAAVEKKEAGNIKERKDELEEEELQELLSKLMDAFNLETPSGPESSVNMDLYSGAQRVCRAFSALVDQIALPNLK.

The ZZ-type zinc finger occupies 223 to 279 (THPARCTLCRTFPITGLRYRCLKCLNFDICQMCFLSGLHSKSHQKSHPVIEHCIQMS). 8 residues coordinate Zn(2+): cysteine 228, cysteine 231, cysteine 243, cysteine 246, cysteine 252, cysteine 255, histidine 265, and histidine 269. A coiled-coil region spans residues 322–351 (HHAQARLLKKQLNQYKDKLQAIYTSQEERI). A disordered region spans residues 382 to 475 (RLQPPGPSSS…QSQTQKMPQK (94 aa)). Composition is skewed to basic and acidic residues over residues 399-410 (KVDHSSTEKVPK) and 431-451 (PKLDEVDRSHRSHTNAEHALR). Over residues 455–472 (SPETTLHSTRAQSQTQKM) the composition is skewed to polar residues. The stretch at 503 to 537 (ALAAVEKKEAGNIKERKDELEEEELQELLSKLMDA) forms a coiled coil.

Its subcellular location is the cell membrane. In Homo sapiens (Human), this protein is Dystrotelin (DYTN).